Consider the following 699-residue polypeptide: Cell pattern formation-associated protein StuA (699 aa).

Disordered stretches follow at residues 1 to 20 (MDGT…LLAP) and 31 to 97 (TPQF…QPEH). Positions 32–49 (PQFKSQQSQPQSQSQYPS) are enriched in low complexity. The segment covering 52–61 (NPDSYSSSSP) has biased composition (polar residues). A compositionally biased stretch (acidic residues) spans 75 to 84 (EDGEDYDQEE). The region spanning 226 to 332 (RVTATLWEDE…HNIGALLYHP (107 aa)) is the HTH APSES-type domain. A DNA-binding region (H-T-H motif) is located at residues 260-281 (GTKLLNVAGMTRGRRDGILKSE). 3 disordered regions span residues 372–594 (AMPT…MNSM), 599–618 (RRDD…DLNN), and 674–699 (PSYP…QSFG). The segment covering 376 to 423 (GYTSQQPLTNGHQSMANTPQPLTNGSQPPMNGSQTPMNGPQPPMQNGG) has biased composition (polar residues). Basic and acidic residues-rich tracts occupy residues 428-438 (RVREDDDDLHR) and 478-491 (GLKR…DMHR). Polar residues predominate over residues 520-529 (NLHQPLSNGD). The span at 535-545 (RGRDDDDDVHR) shows a compositional bias: basic and acidic residues. Residues 566–594 (TSTSNDMLPQSPYYTLSNGAYQGPMMNSM) are compositionally biased toward polar residues. The segment at 669-695 (TVAVSPSYPAGPGYELARPVTNVPRRQ) is nuclear localization domain.

It belongs to the EFG1/PHD1/stuA family.

The protein localises to the nucleus. Functionally, transcription factor that regulates asexual reproduction. Binds the StuA-response elements (StRE) with the consensus sequence 5'-(A/T)CGCG(T/A)N(A/C)-3' at the promoters of target genes. Controls the expression of the gene clusters involved in the production of deoxynivalenol (DON) and 15-acetyldeoxynivalenol (15ADON). Regulates the expression of genes involved in chitin and glucan metabolism. Also controls catalase activity and cell surface hydrophobicity. Plays an important role in pathogenicity. The polypeptide is Cell pattern formation-associated protein StuA (Gibberella zeae (strain ATCC MYA-4620 / CBS 123657 / FGSC 9075 / NRRL 31084 / PH-1) (Wheat head blight fungus)).